A 257-amino-acid polypeptide reads, in one-letter code: Na(+)-translocating NADH-quinone reductase subunit C (257 aa).

Residues 12–32 traverse the membrane as a helical segment; that stretch reads LFVVIALSLVCSIIVSAAAVG. An FMN phosphoryl threonine modification is found at T225.

The protein belongs to the NqrC family. In terms of assembly, composed of six subunits; NqrA, NqrB, NqrC, NqrD, NqrE and NqrF. FMN serves as cofactor.

Its subcellular location is the cell inner membrane. The catalysed reaction is a ubiquinone + n Na(+)(in) + NADH + H(+) = a ubiquinol + n Na(+)(out) + NAD(+). NQR complex catalyzes the reduction of ubiquinone-1 to ubiquinol by two successive reactions, coupled with the transport of Na(+) ions from the cytoplasm to the periplasm. NqrA to NqrE are probably involved in the second step, the conversion of ubisemiquinone to ubiquinol. This is Na(+)-translocating NADH-quinone reductase subunit C from Vibrio cholerae serotype O1 (strain ATCC 39541 / Classical Ogawa 395 / O395).